A 292-amino-acid chain; its full sequence is tRNA (guanine-N(7)-)-methyltransferase (292 aa).

Positions 1–52 (MGKIEATSKEEKLRVQKEAEARRRAYRDLKKEARQMQKEVKFDTDDNSELPK) are disordered. S-adenosyl-L-methionine-binding positions include G106, 129 to 130 (EI), 166 to 167 (NA), and C186. The active site involves D189. An S-adenosyl-L-methionine-binding site is contributed by 264 to 266 (TEE).

The protein belongs to the class I-like SAM-binding methyltransferase superfamily. TrmB family. As to quaternary structure, forms a complex with TRM82.

The protein localises to the nucleus. The catalysed reaction is guanosine(46) in tRNA + S-adenosyl-L-methionine = N(7)-methylguanosine(46) in tRNA + S-adenosyl-L-homocysteine. The protein operates within tRNA modification; N(7)-methylguanine-tRNA biosynthesis. Catalyzes the formation of N(7)-methylguanine at position 46 (m7G46) in tRNA. This is tRNA (guanine-N(7)-)-methyltransferase from Debaryomyces hansenii (strain ATCC 36239 / CBS 767 / BCRC 21394 / JCM 1990 / NBRC 0083 / IGC 2968) (Yeast).